We begin with the raw amino-acid sequence, 455 residues long: La-related protein 6C (455 aa).

Positions 1-20 (MAQMQREEVESVTTEKKRLD) are enriched in basic and acidic residues. Positions 1–29 (MAQMQREEVESVTTEKKRLDGGGGSSGAQ) are disordered. Positions 138 to 229 (NLLSDDLRLK…KRTSQFTDRD (92 aa)) constitute an HTH La-type RNA-binding domain. The RRM domain occupies 236 to 324 (RTVVAENLPD…KGLRVRLLLR (89 aa)). Disordered stretches follow at residues 348–396 (SYES…YAVG) and 414–455 (SLGS…PNNL).

It localises to the nucleus. In terms of biological role, transcriptional regulator. The sequence is that of La-related protein 6C (LARP6C) from Arabidopsis thaliana (Mouse-ear cress).